We begin with the raw amino-acid sequence, 407 residues long: Argininosuccinate synthase (407 aa).

ATP contacts are provided by residues 13–21 and Ala-40; that span reads AYSGGLDTS. L-citrulline contacts are provided by Tyr-91 and Ser-96. ATP is bound at residue Gly-121. Residues Thr-123, Asn-127, and Asp-128 each contribute to the L-aspartate site. L-citrulline is bound at residue Asn-127. The L-citrulline site is built by Arg-131, Ser-182, Ser-191, Glu-267, and Tyr-279.

This sequence belongs to the argininosuccinate synthase family. Type 1 subfamily. In terms of assembly, homotetramer.

Its subcellular location is the cytoplasm. The enzyme catalyses L-citrulline + L-aspartate + ATP = 2-(N(omega)-L-arginino)succinate + AMP + diphosphate + H(+). Its pathway is amino-acid biosynthesis; L-arginine biosynthesis; L-arginine from L-ornithine and carbamoyl phosphate: step 2/3. This Rhizobium etli (strain ATCC 51251 / DSM 11541 / JCM 21823 / NBRC 15573 / CFN 42) protein is Argininosuccinate synthase.